The sequence spans 353 residues: MKFLDEAKVYIRSGDGGNGCVAFRREKFIEFGGPNGGNGGRGGDVVVEAADGLNTLIDYRYQQHFKAQKGVNGMGSDRHGANGKAIVLKVPVGTQIFDEDKETLIHDFTTVGERFVLAEGGNGGFGNAHFKSSTNRAPRHANPGLPGEERWIWLRLKLIADAGLVGLPNAGKSTFLSKVSAAKPKIADYPFTTLHPQLGVVNADGREFVLADIPGLIEGAHEGAGLGDRFLGHVERCRVLLHLIDATCEHAGKAYKTVRGELEAYAETLADKIEIVALNKIDAVEPDELKKQKDRLKRAAKKTPLLISGITGQGVPEALRALAAVIGEAPVSDKAKGAADNAANAEPWAPQDA.

The Obg domain occupies 1-159 (MKFLDEAKVY…RWIWLRLKLI (159 aa)). Residues 160–327 (ADAGLVGLPN…ALRALAAVIG (168 aa)) enclose the OBG-type G domain. GTP-binding positions include 166–173 (GLPNAGKS), 191–195 (FTTLH), 212–215 (DIPG), 279–282 (NKID), and 308–310 (SGI). Mg(2+)-binding residues include serine 173 and threonine 193. A disordered region spans residues 332 to 353 (SDKAKGAADNAANAEPWAPQDA).

This sequence belongs to the TRAFAC class OBG-HflX-like GTPase superfamily. OBG GTPase family. Monomer. The cofactor is Mg(2+).

The protein resides in the cytoplasm. An essential GTPase which binds GTP, GDP and possibly (p)ppGpp with moderate affinity, with high nucleotide exchange rates and a fairly low GTP hydrolysis rate. Plays a role in control of the cell cycle, stress response, ribosome biogenesis and in those bacteria that undergo differentiation, in morphogenesis control. This chain is GTPase Obg, found in Rhodopseudomonas palustris (strain HaA2).